The chain runs to 297 residues: Protoheme IX farnesyltransferase 1 (297 aa).

9 helical membrane passes run 23 to 43 (VVVL…RAGV), 45 to 65 (WSVL…AAAV), 93 to 113 (LPAL…LLMF), 117 to 137 (LTAW…TGFL), 145 to 165 (IVIG…AVSG), 171 to 191 (PLLL…ALAI), 216 to 236 (LHIL…YAIH), 241 to 261 (LYLV…WVLY), and 277 to 297 (IGYL…LLNL).

It belongs to the UbiA prenyltransferase family. Protoheme IX farnesyltransferase subfamily.

Its subcellular location is the cell inner membrane. It catalyses the reaction heme b + (2E,6E)-farnesyl diphosphate + H2O = Fe(II)-heme o + diphosphate. It participates in porphyrin-containing compound metabolism; heme O biosynthesis; heme O from protoheme: step 1/1. Functionally, converts heme B (protoheme IX) to heme O by substitution of the vinyl group on carbon 2 of heme B porphyrin ring with a hydroxyethyl farnesyl side group. This Pseudomonas putida (strain W619) protein is Protoheme IX farnesyltransferase 1.